We begin with the raw amino-acid sequence, 131 residues long: MRRTFFKSKIHRATVTHADLDYEGSVSIDEDLLDASGILEYEAVHVWNITRGTRLQTYAIKGERGSGVICINGAAAHLNKPGDLVILATFAELDEAEARGFKPTVVLVDRKNKIVESDAVEIAGPARRVSA.

Residue Ser25 is the Schiff-base intermediate with substrate; via pyruvic acid of the active site. Position 25 is a pyruvic acid (Ser) (Ser25). Position 57 (Thr57) interacts with substrate. The active-site Proton donor is the Tyr58. Position 73-75 (73-75 (GAA)) interacts with substrate.

This sequence belongs to the PanD family. As to quaternary structure, heterooctamer of four alpha and four beta subunits. Pyruvate is required as a cofactor. Post-translationally, is synthesized initially as an inactive proenzyme, which is activated by self-cleavage at a specific serine bond to produce a beta-subunit with a hydroxyl group at its C-terminus and an alpha-subunit with a pyruvoyl group at its N-terminus.

Its subcellular location is the cytoplasm. It catalyses the reaction L-aspartate + H(+) = beta-alanine + CO2. The protein operates within cofactor biosynthesis; (R)-pantothenate biosynthesis; beta-alanine from L-aspartate: step 1/1. Its function is as follows. Catalyzes the pyruvoyl-dependent decarboxylation of aspartate to produce beta-alanine. This is Aspartate 1-decarboxylase from Anaeromyxobacter sp. (strain Fw109-5).